The chain runs to 497 residues: Ammonium transporter 1 (497 aa).

Residues 1–32 (MSSTTDATPTPSGVNGGDSMTVNLNQFYNNGD) lie on the Extracellular side of the membrane. Residues 33–53 (VAWILTSTALVFIMIPGVGFF) traverse the membrane as a helical segment. Over 54-63 (YSGLARRRSA) the chain is Cytoplasmic. Residues 64–84 (ISMLFLSMMSVAIVAFQWFFW) form a helical membrane-spanning segment. Residues 85–122 (GYSLTFSHEGGPYIGSLANFGLRQTLGRPSSGASSVPD) lie on the Extracellular side of the membrane. A helical membrane pass occupies residues 123–143 (ILFCVFQGMFAAITPALAIGA). The Cytoplasmic portion of the chain corresponds to 144 to 150 (AADRGRM). Residues 151–171 (FPCMVFMFLWTSIVYDPIAFW) form a helical membrane-spanning segment. The Extracellular portion of the chain corresponds to 172-187 (TWNPNGWLNKLGSYDF). Residues 188-208 (AGGSPVHISSGMAALAYSIVI) traverse the membrane as a helical segment. Residues 209–223 (GKRCDHGTTKYRPHN) are Cytoplasmic-facing. A helical membrane pass occupies residues 224–244 (VPHVVLGTVFLWFGWFGFNGG). Over 245-253 (SSAAANMRG) the chain is Extracellular. Residues 254–274 (VMAVVVTHLAASVGGIVWCVI) traverse the membrane as a helical segment. Topologically, residues 275-281 (DFAKNRH) are cytoplasmic. The helical transmembrane segment at 282–302 (WSVVGFCEGAVAGLVAITPGS) threads the bilayer. Gly-303 is a topological domain (extracellular). Residues 304–324 (FVPPWAAVVIGALGAVFCYAA) form a helical membrane-spanning segment. The Cytoplasmic segment spans residues 325–338 (TYLKKIIRVDDALD). Residues 339–359 (IFAEHGVGGMVGNILTALFAA) form a helical membrane-spanning segment. Topologically, residues 360 to 394 (DYIEALDGSGTAYTGGWITHHYIQLGYQLADTVSC) are extracellular. Residues 395–415 (AAYSFAVSCALLFVMNYIPGL) form a helical membrane-spanning segment. The Cytoplasmic segment spans residues 416–497 (SLRVSREDEV…AESEAQAPAI (82 aa)). The segment at 440–497 (YKDSTDEPPPITTSGVQYTSPTVSDSASNEKEQEHRAQNEAQKEEEYRAESEAQAPAI) is disordered. Residues 451 to 466 (TTSGVQYTSPTVSDSA) are compositionally biased toward polar residues. A compositionally biased stretch (basic and acidic residues) spans 467 to 490 (SNEKEQEHRAQNEAQKEEEYRAES).

It belongs to the ammonia transporter channel (TC 1.A.11.2) family.

The protein localises to the membrane. Functionally, transporter for ammonium to use as a nitrogen source. Under ammonium limitation acts as an ammonium sensor, generating a signal that leads to pseudohyphal growth. The polypeptide is Ammonium transporter 1 (amt1) (Schizosaccharomyces pombe (strain 972 / ATCC 24843) (Fission yeast)).